The following is a 283-amino-acid chain: Putative 4-diphosphocytidyl-2-C-methyl-D-erythritol kinase (283 aa).

The active site involves Lys-10. ATP is bound at residue 94-104 (PVCAGLGGGST). Asp-136 is a catalytic residue.

The protein belongs to the GHMP kinase family. IspE subfamily.

It catalyses the reaction 4-CDP-2-C-methyl-D-erythritol + ATP = 4-CDP-2-C-methyl-D-erythritol 2-phosphate + ADP + H(+). Functionally, catalyzes the phosphorylation of the position 2 hydroxy group of 4-diphosphocytidyl-2C-methyl-D-erythritol. This chain is Putative 4-diphosphocytidyl-2-C-methyl-D-erythritol kinase, found in Streptococcus agalactiae serotype III (strain NEM316).